Here is a 164-residue protein sequence, read N- to C-terminus: Axial regulator YABBY 5 (164 aa).

The C4-type zinc-finger motif lies at 16-43 (CNFCNIILAVNVPCSSLFDIVTVRCGHC).

Belongs to the YABBY family. As to quaternary structure, binds to LUG and LUH; these complexes promote adaxial cell identity in leaves as well as embryonic shoot apical meristem (SAM) initiation and postembryonic SAM maintenance. Interacts with SPL/NZZ and SPEAR2.

The protein resides in the nucleus. Functionally, promotes adaxial cell identity. Regulates the initiation of embryonic shoot apical meristem (SAM) development. The chain is Axial regulator YABBY 5 (YAB5) from Arabidopsis thaliana (Mouse-ear cress).